Reading from the N-terminus, the 95-residue chain is UPF0512 protein H (95 aa).

This sequence belongs to the UPF0512 family.

The polypeptide is UPF0512 protein H (Dictyostelium discoideum (Social amoeba)).